Here is a 65-residue protein sequence, read N- to C-terminus: Small ribosomal subunit protein bS21A (65 aa).

Belongs to the bacterial ribosomal protein bS21 family.

The polypeptide is Small ribosomal subunit protein bS21A (Francisella tularensis subsp. tularensis (strain FSC 198)).